Here is a 134-residue protein sequence, read N- to C-terminus: DNA-binding protein inhibitor ID-2 (134 aa).

Serine 14 and serine 25 each carry phosphoserine. Residues 23–75 (SRSKTPVDDPMSLLYNMNDCYSKLKELVPSIPQNKKVSKMEILQHVIDYILDL) enclose the bHLH domain. The Nuclear export signal signature appears at 106–115 (LNTDISILSL).

Interacts with GATA4 and NKX2-5. Interacts with NR0B2. Interacts with CLOCK and BMAL1. Interacts with IFI204. Interacts with NEDD9/HEF1. Interacts with ASB4; this interaction promotes ID2 proteasomal degradation. Ubiquitinated in a ASB4-depedent manner, leading to proteasomal degradation. Post-translationally, phosphorylated in vitro by CDK1, PKA and PKC.

The protein localises to the cytoplasm. It is found in the nucleus. Transcriptional regulator (lacking a basic DNA binding domain) which negatively regulates the basic helix-loop-helix (bHLH) transcription factors by forming heterodimers and inhibiting their DNA binding and transcriptional activity. Implicated in regulating a variety of cellular processes, including cellular growth, senescence, differentiation, apoptosis, angiogenesis, and neoplastic transformation. Inhibits skeletal muscle and cardiac myocyte differentiation. Regulates the circadian clock by repressing the transcriptional activator activity of the CLOCK-BMAL1 heterodimer. Restricts the CLOCK and BMAL1 localization to the cytoplasm. Plays a role in both the input and output pathways of the circadian clock: in the input component, is involved in modulating the magnitude of photic entrainment and in the output component, contributes to the regulation of a variety of liver clock-controlled genes involved in lipid metabolism. This chain is DNA-binding protein inhibitor ID-2 (ID2), found in Sus scrofa (Pig).